The primary structure comprises 429 residues: Adenylosuccinate synthetase (429 aa).

GTP is bound by residues 12–18 (GDEGKGK) and 40–42 (GHT). Residue aspartate 13 is the Proton acceptor of the active site. Residues aspartate 13 and glycine 40 each coordinate Mg(2+). IMP is bound by residues 13 to 16 (DEGK), 38 to 41 (NAGH), threonine 129, arginine 143, glutamine 223, threonine 238, and arginine 302. The active-site Proton donor is the histidine 41. Residue 298 to 304 (TVTGRKR) participates in substrate binding. GTP-binding positions include arginine 304, 330–332 (KLD), and 412–414 (STS).

This sequence belongs to the adenylosuccinate synthetase family. As to quaternary structure, homodimer. Mg(2+) is required as a cofactor.

The protein resides in the cytoplasm. The catalysed reaction is IMP + L-aspartate + GTP = N(6)-(1,2-dicarboxyethyl)-AMP + GDP + phosphate + 2 H(+). The protein operates within purine metabolism; AMP biosynthesis via de novo pathway; AMP from IMP: step 1/2. Its function is as follows. Plays an important role in the de novo pathway of purine nucleotide biosynthesis. Catalyzes the first committed step in the biosynthesis of AMP from IMP. The protein is Adenylosuccinate synthetase of Novosphingobium aromaticivorans (strain ATCC 700278 / DSM 12444 / CCUG 56034 / CIP 105152 / NBRC 16084 / F199).